We begin with the raw amino-acid sequence, 148 residues long: Large ribosomal subunit protein bL9 (148 aa).

This sequence belongs to the bacterial ribosomal protein bL9 family.

Binds to the 23S rRNA. The sequence is that of Large ribosomal subunit protein bL9 from Acinetobacter baumannii (strain AB307-0294).